Reading from the N-terminus, the 92-residue chain is Endoribonuclease VapD homolog (92 aa).

The protein belongs to the VapD ribonuclease family. As to quaternary structure, homodimer.

Cleaves ssRNA, mostly between U:A. The protein is Endoribonuclease VapD homolog of Neisseria gonorrhoeae.